Reading from the N-terminus, the 473-residue chain is N-lysine methyltransferase SETD6 (473 aa).

An N6-methylated lysine; by autocatalysis modification is found at Lys39. The 227-residue stretch at Pro60–Gly286 folds into the SET domain. Ala73–Tyr75 is an S-adenosyl-L-methionine binding site. Trp122 serves as a coordination point for substrate. The residue at position 179 (Lys179) is an N6-methylated lysine; by autocatalysis. Position 223 (Tyr223) interacts with S-adenosyl-L-methionine. 2 residues coordinate substrate: Ser224 and Gln226. Residue Asn251–His252 participates in S-adenosyl-L-methionine binding. 2 residues coordinate substrate: Tyr262 and Tyr297. Tyr297 is an S-adenosyl-L-methionine binding site. An N6-methylated lysine; by autocatalysis modification is found at Lys372.

The protein belongs to the class V-like SAM-binding methyltransferase superfamily. Histone-lysine methyltransferase family. SETD6 subfamily. Monomer, homodimer and homotrimer; these structures are stabilized in the presence of S-adenosyl-L-methionine (SAM). In terms of processing, automethylated; Lys-39 and Lys-179 serve as the major automethylation sites.

It is found in the nucleus. It carries out the reaction L-lysyl-[protein] + S-adenosyl-L-methionine = N(6)-methyl-L-lysyl-[protein] + S-adenosyl-L-homocysteine + H(+). The catalysed reaction is L-lysyl(8)-[histone H2AZ] + S-adenosyl-L-methionine = N(6)-methyl-L-lysyl(8)-[histone H2AZ] + S-adenosyl-L-homocysteine + H(+). Its activity is regulated as follows. Activated by automethylation. In terms of biological role, protein-lysine N-methyltransferase. Monomethylates 'Lys-310' of the RELA subunit of NF-kappa-B complex, leading to down-regulation of NF-kappa-B transcription factor activity. Monomethylates 'Lys-8' of H2AZ (H2AZK8me1). Required for the maintenance of embryonic stem cell self-renewal. Methylates PAK4. The chain is N-lysine methyltransferase SETD6 from Homo sapiens (Human).